The primary structure comprises 152 residues: Endoribonuclease YbeY (152 aa).

Zn(2+)-binding residues include His-113, His-117, and His-123.

It belongs to the endoribonuclease YbeY family. It depends on Zn(2+) as a cofactor.

It is found in the cytoplasm. Its function is as follows. Single strand-specific metallo-endoribonuclease involved in late-stage 70S ribosome quality control and in maturation of the 3' terminus of the 16S rRNA. The sequence is that of Endoribonuclease YbeY from Janthinobacterium sp. (strain Marseille) (Minibacterium massiliensis).